Here is a 700-residue protein sequence, read N- to C-terminus: AP-1-like transcription factor yap1 (700 aa).

Disordered regions lie at residues 17-185 (SPGH…KDLE) and 228-296 (MPVN…VSLR). The short motif at 34-41 (MPVPGRDT) is the Bipartite nuclear localization signal element. Residues 47-59 (PSVSNGSQPSAHQ) show a composition bias toward polar residues. Positions 67–74 (SPTPEMPP) match the Bipartite nuclear localization signal motif. Over residues 103–112 (LDDDDDDASD) the composition is skewed to acidic residues. Residues 127–138 (AGRAAAASASGS) are compositionally biased toward low complexity. Residues 150–185 (GDGKRELSKSERRKEQNRAAQKAFRERREAKVKDLE) show a composition bias toward basic and acidic residues. The region spanning 156-219 (LSKSERRKEQ…KRLQEENVAL (64 aa)) is the bZIP domain. The tract at residues 158–182 (KSERRKEQNRAAQKAFRERREAKVK) is basic motif. A leucine-zipper region spans residues 184-191 (LEDKVAEL). Transcription activation stretches follow at residues 213 to 400 (QEEN…QPDS) and 452 to 577 (LGAT…GRGN). The segment covering 231–244 (NSRNSPNSNNGSFS) has biased composition (low complexity). The segment covering 280–296 (SANTISDNSSESLVSLR) has biased composition (polar residues). The n-CRD stretch occupies residues 306–318 (FSDHFNTYALGVV). 2 disordered regions span residues 320 to 359 (VPPP…PSAD) and 542 to 609 (NYLN…KATT). 2 stretches are compositionally biased toward low complexity: residues 335–358 (SASN…PPSA) and 542–573 (NYLN…NVSS). Polar residues predominate over residues 589 to 607 (MGSSRTSVSHDSTDLQGKA). The tract at residues 642 to 675 (PSELWMRFGMQHENSTEHLLIDDLCDQMRAKATC) is c-CRD. The short motif at 660 to 667 (LLIDDLCD) is the Nuclear export signal element. The cysteines at positions 666 and 675 are disulfide-linked.

This sequence belongs to the bZIP family. YAP subfamily. Depending on the oxidative stress inducing agent, yap1 can undergo two distinct conformational changes, both involving disulfide bond formation, and both masking the nuclear export signal, thus abolishing nuclear export.

It localises to the nucleus. It is found in the cytoplasm. In terms of biological role, transcription activator involved in oxidative stress response and redox homeostasis. Regulates the transcription of genes encoding antioxidant enzymes and components of the cellular thiol-reducing pathways. Involved in antifungal resistance to fluconazole. This chain is AP-1-like transcription factor yap1, found in Cryptococcus neoformans var. grubii serotype A (strain H99 / ATCC 208821 / CBS 10515 / FGSC 9487) (Filobasidiella neoformans var. grubii).